The sequence spans 305 residues: Putative glutamine--fructose-6-phosphate aminotransferase [isomerizing] (305 aa).

Cys-2 serves as the catalytic Nucleophile; for GATase activity. Residues 2-305 (CGIFGYCNFL…RLCITSAVCE (304 aa)) form the Glutamine amidotransferase type-2 domain.

The enzyme catalyses D-fructose 6-phosphate + L-glutamine = D-glucosamine 6-phosphate + L-glutamate. It functions in the pathway nucleotide-sugar biosynthesis; UDP-N-acetyl-alpha-D-glucosamine biosynthesis; alpha-D-glucosamine 6-phosphate from D-fructose 6-phosphate: step 1/1. Functionally, involved in amino sugar synthesis (formation of chitin, supplies the amino sugars of asparagine-linked oligosaccharides of glycoproteins). The sequence is that of Putative glutamine--fructose-6-phosphate aminotransferase [isomerizing] from Saccharomyces cerevisiae (strain Lalvin EC1118 / Prise de mousse) (Baker's yeast).